We begin with the raw amino-acid sequence, 129 residues long: LEM domain-containing protein 1 (129 aa).

One can recognise an LEM domain in the interval 1–45 (MVDVKCLSDYELHKHLMKLGFTPGPILPSTRKTYEKKLVQLLASP). Positions 45 to 129 (PPWKPPVMKR…RAPRTTSHGA (85 aa)) are disordered. A compositionally biased stretch (basic and acidic residues) spans 83-97 (SLKKTTLDATRDPRA).

The protein is LEM domain-containing protein 1 (Lemd1) of Mus musculus (Mouse).